The sequence spans 328 residues: 7,8-didemethyl-8-hydroxy-5-deazariboflavin synthase (328 aa).

The Radical SAM core domain maps to 1-242; the sequence is MTYSRNIFIP…PDVSIQVPPN (242 aa). [4Fe-4S] cluster-binding residues include Cys-15, Cys-19, and Cys-22.

This sequence belongs to the radical SAM superfamily. CofG family. As to quaternary structure, consists of two subunits, CofG and CofH. It depends on [4Fe-4S] cluster as a cofactor.

The catalysed reaction is 5-amino-5-(4-hydroxybenzyl)-6-(D-ribitylimino)-5,6-dihydrouracil + S-adenosyl-L-methionine = 7,8-didemethyl-8-hydroxy-5-deazariboflavin + 5'-deoxyadenosine + L-methionine + NH4(+) + H(+). The protein operates within cofactor biosynthesis; coenzyme F0 biosynthesis. In terms of biological role, catalyzes the radical-mediated synthesis of 7,8-didemethyl-8-hydroxy-5-deazariboflavin from 5-amino-5-(4-hydroxybenzyl)-6-(D-ribitylimino)-5,6-dihydrouracil. This chain is 7,8-didemethyl-8-hydroxy-5-deazariboflavin synthase, found in Methanothermobacter thermautotrophicus (strain ATCC 29096 / DSM 1053 / JCM 10044 / NBRC 100330 / Delta H) (Methanobacterium thermoautotrophicum).